A 300-amino-acid chain; its full sequence is Meiosis-specific cyclin crs1 (300 aa).

Residues 61–183 (IIEQEKKGLT…VLALLNFDIY (123 aa)) form the Cyclin N-terminal domain.

This sequence belongs to the cyclin family. Cyclin AB subfamily.

Its subcellular location is the cytoplasm. The protein resides in the nucleus. Its function is as follows. Has a role in meiotic chromosome segregation. In Schizosaccharomyces pombe (strain 972 / ATCC 24843) (Fission yeast), this protein is Meiosis-specific cyclin crs1 (crs1).